A 360-amino-acid polypeptide reads, in one-letter code: Lipid-A-disaccharide synthase (360 aa).

This sequence belongs to the LpxB family.

The catalysed reaction is a lipid X + a UDP-2-N,3-O-bis[(3R)-3-hydroxyacyl]-alpha-D-glucosamine = a lipid A disaccharide + UDP + H(+). It functions in the pathway bacterial outer membrane biogenesis; LPS lipid A biosynthesis. In terms of biological role, condensation of UDP-2,3-diacylglucosamine and 2,3-diacylglucosamine-1-phosphate to form lipid A disaccharide, a precursor of lipid A, a phosphorylated glycolipid that anchors the lipopolysaccharide to the outer membrane of the cell. This Helicobacter acinonychis (strain Sheeba) protein is Lipid-A-disaccharide synthase.